The sequence spans 186 residues: Agglutinin isolectin 3 (186 aa).

Pyrrolidone carboxylic acid is present on Gln1. Chitin-binding type-1 domains are found at residues 1-42 (QRCG…ACWT), 43-85 (SKRC…PCRA), 86-128 (DIKC…ACST), and 129-171 (DKPC…GCDG). 16 disulfides stabilise this stretch: Cys3/Cys18, Cys12/Cys24, Cys17/Cys31, Cys35/Cys40, Cys46/Cys61, Cys55/Cys67, Cys60/Cys74, Cys78/Cys83, Cys89/Cys104, Cys98/Cys110, Cys103/Cys117, Cys121/Cys126, Cys132/Cys147, Cys141/Cys153, Cys146/Cys160, and Cys164/Cys169. Substrate is bound at residue 10-12 (MEC). Position 62 to 73 (62 to 73 (SQYGHCGFGAEY)) interacts with substrate. Residue 114–115 (SE) participates in substrate binding. Positions 172 to 186 (VFAEAIATNSTLLAE) are excised as a propeptide. N-linked (GlcNAc...) asparagine glycosylation is present at Asn180.

As to quaternary structure, homodimer, u-shaped.

Its function is as follows. N-acetyl-D-glucosamine / N-acetyl-D-neuraminic acid binding lectin. The protein is Agglutinin isolectin 3 of Triticum aestivum (Wheat).